The primary structure comprises 147 residues: Hemoglobin subunit beta-2 (147 aa).

A Globin domain is found at 3 to 147 (EWTDSERAII…VVSALGRQYH (145 aa)). Heme b is bound by residues His64 and His93.

Belongs to the globin family. As to quaternary structure, hb 3 is a heterotetramer of two alpha-2 and two beta-2 chains. As to expression, red blood cells.

Functionally, involved in oxygen transport from gills to the various peripheral tissues. The polypeptide is Hemoglobin subunit beta-2 (hbb2) (Arctogadus glacialis (Arctic cod)).